The following is a 438-amino-acid chain: Phosphoribosylamine--glycine ligase (438 aa).

Positions 108-316 (RTFMERNEIP…LLEVAEGIVD (209 aa)) constitute an ATP-grasp domain. 135 to 194 (VDDFGRPVVVKPIGLTGGKGVKVVGYQLRDNEEAKSYAEELIRRDGRVLIEERTNGVEFT) provides a ligand contact to ATP. The Mg(2+) site is built by Gln-274, Glu-286, and Asn-288. 3 residues coordinate Mn(2+): Gln-274, Glu-286, and Asn-288.

This sequence belongs to the GARS family. The cofactor is Mg(2+). Mn(2+) serves as cofactor.

The catalysed reaction is 5-phospho-beta-D-ribosylamine + glycine + ATP = N(1)-(5-phospho-beta-D-ribosyl)glycinamide + ADP + phosphate + H(+). It participates in purine metabolism; IMP biosynthesis via de novo pathway; N(1)-(5-phospho-D-ribosyl)glycinamide from 5-phospho-alpha-D-ribose 1-diphosphate: step 2/2. The protein is Phosphoribosylamine--glycine ligase of Thermococcus gammatolerans (strain DSM 15229 / JCM 11827 / EJ3).